A 567-amino-acid polypeptide reads, in one-letter code: Oxygen-dependent choline dehydrogenase (567 aa).

4 to 33 (DYIIIGAGSAGNVLAARLTEDADVTVLLLE) serves as a coordination point for FAD. The Proton acceptor role is filled by His-473.

It belongs to the GMC oxidoreductase family. The cofactor is FAD.

The catalysed reaction is choline + A = betaine aldehyde + AH2. The enzyme catalyses betaine aldehyde + NAD(+) + H2O = glycine betaine + NADH + 2 H(+). It participates in amine and polyamine biosynthesis; betaine biosynthesis via choline pathway; betaine aldehyde from choline (cytochrome c reductase route): step 1/1. Its function is as follows. Involved in the biosynthesis of the osmoprotectant glycine betaine. Catalyzes the oxidation of choline to betaine aldehyde and betaine aldehyde to glycine betaine at the same rate. The protein is Oxygen-dependent choline dehydrogenase of Yersinia pestis bv. Antiqua (strain Antiqua).